Reading from the N-terminus, the 277-residue chain is Adenylate kinase (277 aa).

53 to 58 (GAGKGT) lines the ATP pocket. An NMP region spans residues 73 to 102 (ATGDMLRAQVAAKTPLGREAKKIMDAGGLV). Residues threonine 74, arginine 79, 100–102 (GLV), 129–132 (GFPR), and glutamine 136 contribute to the AMP site. Residues 170–207 (GRLVHPASGRSYHKIFNPPKAPMTDDATGEPLIQRSDD) form an LID region. Residues arginine 171 and 180–181 (SY) each bind ATP. The AMP site is built by arginine 204 and arginine 215. Glutamine 243 serves as a coordination point for ATP.

It belongs to the adenylate kinase family. AK2 subfamily. Monomer.

The protein resides in the cytoplasm. Its subcellular location is the cytosol. It localises to the mitochondrion intermembrane space. It catalyses the reaction AMP + ATP = 2 ADP. Functionally, catalyzes the reversible transfer of the terminal phosphate group between ATP and AMP. Plays an important role in cellular energy homeostasis and in adenine nucleotide metabolism. Adenylate kinase activity is critical for regulation of the phosphate utilization and the AMP de novo biosynthesis pathways. The polypeptide is Adenylate kinase (Phaeosphaeria nodorum (strain SN15 / ATCC MYA-4574 / FGSC 10173) (Glume blotch fungus)).